Here is a 230-residue protein sequence, read N- to C-terminus: MVPEYSRFYNILGYNFKDCTLLIRALTHRSKTKKNYERLEFLGDSVLSFVIAEVLYKQFTDLAEGKLSQLRSKLVKGTTLAQLASSLKMDEYIILGASEQGGHKREKILEDVFEAVIGAIYLDSDFATVKKVILKWYQPIISSINLDTIKVKDSKSKLQEILLQNALSLPEYSIETIDGKDHEQQFTVVAVSKDLNLRVKAQGTSRKKAEQKTAEKMIEMLSQQGLHEKK.

The RNase III domain maps to 5-125 (YSRFYNILGY…VIGAIYLDSD (121 aa)). Glutamate 40 lines the Mg(2+) pocket. Aspartate 44 is a catalytic residue. Residues aspartate 111 and glutamate 114 each coordinate Mg(2+). Glutamate 114 is a catalytic residue. A DRBM domain is found at 153 to 223 (DSKSKLQEIL…AEKMIEMLSQ (71 aa)).

Belongs to the ribonuclease III family. Homodimer. It depends on Mg(2+) as a cofactor.

Its subcellular location is the cytoplasm. It catalyses the reaction Endonucleolytic cleavage to 5'-phosphomonoester.. Its function is as follows. Digests double-stranded RNA. Involved in the processing of primary rRNA transcript to yield the immediate precursors to the large and small rRNAs (23S and 16S). Processes some mRNAs, and tRNAs when they are encoded in the rRNA operon. Processes pre-crRNA and tracrRNA of type II CRISPR loci if present in the organism. The sequence is that of Ribonuclease 3 from Francisella tularensis subsp. tularensis (strain WY96-3418).